A 428-amino-acid polypeptide reads, in one-letter code: Adenylosuccinate synthetase (428 aa).

GTP is bound by residues 12–18 and 40–42; these read GDEGKGK and GHT. The active-site Proton acceptor is the D13. Residues D13 and G40 each contribute to the Mg(2+) site. Residues 13–16, 38–41, T128, R142, Q223, T238, and R302 contribute to the IMP site; these read DEGK and NAGH. The active-site Proton donor is H41. Residue 298–304 participates in substrate binding; sequence TTTGRPR. Residues R304, 330–332, and 412–414 contribute to the GTP site; these read KLD and GVG.

This sequence belongs to the adenylosuccinate synthetase family. Homodimer. The cofactor is Mg(2+).

It is found in the cytoplasm. The enzyme catalyses IMP + L-aspartate + GTP = N(6)-(1,2-dicarboxyethyl)-AMP + GDP + phosphate + 2 H(+). It participates in purine metabolism; AMP biosynthesis via de novo pathway; AMP from IMP: step 1/2. Functionally, plays an important role in the de novo pathway of purine nucleotide biosynthesis. Catalyzes the first committed step in the biosynthesis of AMP from IMP. This is Adenylosuccinate synthetase from Kineococcus radiotolerans (strain ATCC BAA-149 / DSM 14245 / SRS30216).